The following is a 678-amino-acid chain: DNA ligase (678 aa).

NAD(+) contacts are provided by residues 35-39 (DSVYD), 84-85 (SL), and glutamate 116. The N6-AMP-lysine intermediate role is filled by lysine 118. Arginine 139, glutamate 178, lysine 297, and lysine 321 together coordinate NAD(+). Zn(2+)-binding residues include cysteine 415, cysteine 418, cysteine 433, and cysteine 438. The BRCT domain maps to 600–678 (DGNQIFAGKT…EAQLLEMLNE (79 aa)).

Belongs to the NAD-dependent DNA ligase family. LigA subfamily. The cofactor is Mg(2+). It depends on Mn(2+) as a cofactor.

It catalyses the reaction NAD(+) + (deoxyribonucleotide)n-3'-hydroxyl + 5'-phospho-(deoxyribonucleotide)m = (deoxyribonucleotide)n+m + AMP + beta-nicotinamide D-nucleotide.. Functionally, DNA ligase that catalyzes the formation of phosphodiester linkages between 5'-phosphoryl and 3'-hydroxyl groups in double-stranded DNA using NAD as a coenzyme and as the energy source for the reaction. It is essential for DNA replication and repair of damaged DNA. This Nostoc punctiforme (strain ATCC 29133 / PCC 73102) protein is DNA ligase.